The following is a 1322-amino-acid chain: Serine/threonine-protein kinase TIO (1322 aa).

One can recognise a Protein kinase domain in the interval 6–256 (YHVIELVGEG…WPALREHPFV (251 aa)). ATP contacts are provided by residues 12–20 (VGEGSFGRV) and Lys35. The active-site Proton acceptor is Asp127. The tract at residues 1000 to 1322 (CMEDRDLLKA…VIVAKVSGES (323 aa)) is required for the binding to Kinesin-12 members. ARM repeat units follow at residues 1056 to 1098 (PRLA…DLSR), 1101 to 1140 (KAFY…NMCR), 1143 to 1182 (GYFY…NAAY), 1183 to 1223 (HNDT…NLVR), 1226 to 1273 (NKLC…LFSL), and 1281 to 1320 (QICR…KVSG).

The protein belongs to the protein kinase superfamily. Ser/Thr protein kinase family. In terms of assembly, interacts with Kinesin-12 members KIN12A/PAKRP1 and KIN12B/PAKRP1L. Interacts with KIN7B/NACK2. Ubiquitous.

The protein resides in the cytoplasm. It localises to the cytoskeleton. It is found in the phragmoplast. It catalyses the reaction L-seryl-[protein] + ATP = O-phospho-L-seryl-[protein] + ADP + H(+). The enzyme catalyses L-threonyl-[protein] + ATP = O-phospho-L-threonyl-[protein] + ADP + H(+). Its function is as follows. Plays a role in conventional modes of cytokinesis in meristems and during male gametogenesis but also acts in nonconventional modes of cytokinesis (cellularization) during female gametogenesis. Constitutes a signaling module in association with Kinesin-12 members that is required to support phragmoplast expansion and cell-plate growth in plant cells. This chain is Serine/threonine-protein kinase TIO (TIO), found in Arabidopsis thaliana (Mouse-ear cress).